The primary structure comprises 445 residues: Phosphoglucosamine mutase (445 aa).

The active-site Phosphoserine intermediate is Ser102. 4 residues coordinate Mg(2+): Ser102, Asp241, Asp243, and Asp245. Position 102 is a phosphoserine (Ser102).

The protein belongs to the phosphohexose mutase family. Mg(2+) is required as a cofactor. Activated by phosphorylation.

It catalyses the reaction alpha-D-glucosamine 1-phosphate = D-glucosamine 6-phosphate. Its function is as follows. Catalyzes the conversion of glucosamine-6-phosphate to glucosamine-1-phosphate. This is Phosphoglucosamine mutase from Citrobacter koseri (strain ATCC BAA-895 / CDC 4225-83 / SGSC4696).